The following is a 274-amino-acid chain: Large ribosomal subunit protein uL2cz/uL2cy (274 aa).

Disordered regions lie at residues 1–21 and 224–274; these read MAIH…VDSQ and NPVD…RRSK.

It belongs to the universal ribosomal protein uL2 family. In terms of assembly, part of the 50S ribosomal subunit.

It is found in the plastid. It localises to the chloroplast. The polypeptide is Large ribosomal subunit protein uL2cz/uL2cy (rpl2-A) (Populus trichocarpa (Western balsam poplar)).